A 92-amino-acid chain; its full sequence is Co-chaperonin GroES (92 aa).

It belongs to the GroES chaperonin family. As to quaternary structure, heptamer of 7 subunits arranged in a ring. Interacts with the chaperonin GroEL.

It is found in the cytoplasm. Functionally, together with the chaperonin GroEL, plays an essential role in assisting protein folding. The GroEL-GroES system forms a nano-cage that allows encapsulation of the non-native substrate proteins and provides a physical environment optimized to promote and accelerate protein folding. GroES binds to the apical surface of the GroEL ring, thereby capping the opening of the GroEL channel. The chain is Co-chaperonin GroES from Thermotoga petrophila (strain ATCC BAA-488 / DSM 13995 / JCM 10881 / RKU-1).